The following is a 784-amino-acid chain: MAQKMDCGAGLLGFQAEASVEDSTLLMQTLMEAIQISEAPPTNQATAAASGPNASPQSSQPPSANEVADIQALAAATKPKTAFKAQNATTKGPNAAYDFSQALNAKEIPSTPPTVAFKAPNAPSKGPNAAYDFSQAATTSELTAKPEMAFKAQNATTKVGPNATYNFSPSLNANEMVNTQPKTAFKAWNDTTKAPTAETQTQNINQAKMATSQADIEADPGPGICESDGAAAQTSADGSQAQNLESRTIIRGKRTRKINNLNVEESSSGDQRRAPLAPGTWRSAPVPITTQSPPGAPPNVLWQTPLAWQNPSGWQNQPARQTPPARQSPPARQTPPAWQNPVAWQNPVIWPNPVIWQNPVIWPNPIVWPGPVVWPNPLAWQNPPGWQTPPGWQTPPGWQGPPDWQGPPDWPLPPDWPLPPDWPLPTDWPLPPDWIPTDWPVPPDWQNLRPSPNLRPSPNSRASQNLGASQPRDVALLQERANKLVKYLMLKDYTKVPIKRSEMLRDIIREYTDVYPEIIERACFVLEKKFGIQLKEIDKEEHLYILISTPESLAGILGTTKDTPKLGLLLVILGVIFMNGNRASEAVLWEALRKMGLRPGVRHPLLGDLRKLLTYEFVKQKYLDYRRVPNSNPPEYEFLWGLRSYHETSKMKVLRFIAEVQKRDPRDWTAQFMEAADEALDALDAAAAEAEARAEARTRMGIGDEAVSGPWSWDDIEFELLTWDEEGDFGDPWSRIPFTFWARYHQNARSRFPQTFAGPIIGPGGTASANFAANFGAIGFFWVE.

The disordered stretch occupies residues 41–67 (PTNQATAAASGPNASPQSSQPPSANEV). Positions 47–65 (AAASGPNASPQSSQPPSAN) are enriched in low complexity. Residue Tyr97 is modified to Phosphotyrosine. Polar residues-rich tracts occupy residues 195–214 (PTAE…TSQA), 232–246 (AQTS…NLES), 259–269 (NNLNVEESSSG), and 306–320 (LAWQ…QPAR). Residues 195–339 (PTAETQTQNI…PARQTPPAWQ (145 aa)) are disordered. 19 repeat units span residues 302–307 (WQTPLA), 308–313 (WQNPSG), 314–319 (WQNQPA), 338–343 (WQNPVA), 344–349 (WQNPVI), 350–355 (WPNPVI), 356–361 (WQNPVI), 362–367 (WPNPIV), 368–373 (WPGPVV), 374–379 (WPNPLA), 380–385 (WQNPPG), 386–391 (WQTPPG), 392–397 (WQTPPG), 398–403 (WQGPPD), 404–409 (WQGPPD), 410–415 (WPLPPD), 416–421 (WPLPPD), 422–427 (WPLPTD), and 428–433 (WPLPPD). A 22 X 6 AA tandem repeats of W-[PQ]-X-P-X-X region spans residues 302–450 (WQTPLAWQNP…VPPDWQNLRP (149 aa)). Positions 379-418 (AWQNPPGWQTPPGWQTPPGWQGPPDWQGPPDWPLPPDWPL) are disordered. Positions 383–403 (PPGWQTPPGWQTPPGWQGPPD) are enriched in low complexity. Pro residues predominate over residues 404 to 418 (WQGPPDWPLPPDWPL). The 20; approximate repeat unit spans residues 434 to 438 (WIPTD). 2 consecutive repeat copies span residues 439 to 444 (WPVPPD) and 445 to 450 (WQNLRP). The disordered stretch occupies residues 441–471 (VPPDWQNLRPSPNLRPSPNSRASQNLGASQP). A compositionally biased stretch (low complexity) spans 447 to 461 (NLRPSPNLRPSPNSR). The MAGE domain maps to 477–675 (LQERANKLVK…RDWTAQFMEA (199 aa)).

As to quaternary structure, interacts with DLX5, DLX7 and MSX2 and forms homomultimers. Interacts with UNC5A. Interacts with TRIM28 and PJA1. Interacts with NGFR/p75NTR and RORA.

It is found in the cytoplasm. The protein localises to the cell membrane. The protein resides in the nucleus. In terms of biological role, involved in the apoptotic response after nerve growth factor (NGF) binding in neuronal cells. Inhibits cell cycle progression, and facilitates NGFR-mediated apoptosis. May act as a regulator of the function of DLX family members. May enhance ubiquitin ligase activity of RING-type zinc finger-containing E3 ubiquitin-protein ligases. Proposed to act through recruitment and/or stabilization of the Ubl-conjugating enzyme (E2) at the E3:substrate complex. Plays a role in the circadian rhythm regulation. May act as RORA co-regulator, modulating the expression of core clock genes such as BMAL1 and NFIL3, induced, or NR1D1, repressed. This chain is Melanoma-associated antigen D1 (MAGED1), found in Sus scrofa (Pig).